The chain runs to 317 residues: Ferrochelatase (317 aa).

Fe cation-binding residues include His184 and Glu259.

This sequence belongs to the ferrochelatase family.

Its subcellular location is the cytoplasm. It carries out the reaction heme b + 2 H(+) = protoporphyrin IX + Fe(2+). It functions in the pathway porphyrin-containing compound metabolism; protoheme biosynthesis; protoheme from protoporphyrin-IX: step 1/1. Functionally, catalyzes the ferrous insertion into protoporphyrin IX. This is Ferrochelatase from Chlamydia muridarum (strain MoPn / Nigg).